A 55-amino-acid polypeptide reads, in one-letter code: TGB2 protein (55 aa).

Residues 20–39 traverse the membrane as a helical segment; the sequence is NAAFAVVLLLSLLIYGSRCL.

Belongs to the carlavirus/potexvirus TGB2 protein family.

The protein resides in the host membrane. In terms of biological role, the three proteins TGB1, TGB2 and TGB3 are required for virus movement. The chain is TGB2 protein from Potato virus X (strain Xc) (PVX).